A 528-amino-acid polypeptide reads, in one-letter code: Dihydromonacolin L monooxygenase LovA (528 aa).

Over 1–23 the chain is Cytoplasmic; that stretch reads MTVDALTQPHHLLSLAWNDTQQH. A helical; Signal-anchor for type II membrane protein transmembrane segment spans residues 24–44; that stretch reads GSWFAPLVTTSAGLLCLLLYL. Residues 45 to 528 are Lumenal-facing; that stretch reads CSSGRRSDLP…DEDIRLPGSL (484 aa). Residue C465 coordinates heme.

Belongs to the cytochrome P450 family. The cofactor is heme.

It is found in the membrane. Its subcellular location is the endoplasmic reticulum membrane. It carries out the reaction dihydromonacolin L carboxylate + reduced [NADPH--hemoprotein reductase] + O2 = monacolin L carboxylate + oxidized [NADPH--hemoprotein reductase] + 2 H2O + H(+). The catalysed reaction is monacolin L carboxylate + reduced [NADPH--hemoprotein reductase] + O2 = monacolin J carboxylate + oxidized [NADPH--hemoprotein reductase] + H2O + H(+). It participates in polyketide biosynthesis; lovastatin biosynthesis. Its function is as follows. Dihydromonacolin L monooxygenase; part of the gene cluster that mediates the biosynthesis of lovastatin (also known as mevinolin, mevacor or monacolin K), a hypolipidemic inhibitor of (3S)-hydroxymethylglutaryl-coenzyme A (HMG-CoA) reductase (HMGR). The first step in the biosynthesis of lovastatin is the production of dihydromonacolin L acid by the lovastatin nonaketide synthase lovB and the trans-acting enoyl reductase lovC via condensation of one acetyl-CoA unit and 8 malonyl-CoA units. Dihydromonacolin L acid is released from lovB by the thioesterase lovG. Next, dihydromonacolin L acid is oxidized by the dihydromonacolin L monooxygenase lovA twice to form monacolin J acid. The 2-methylbutyrate moiety of lovastatin is synthesized by the lovastatin diketide synthase lovF via condensation of one acetyl-CoA unit and one malonyl-CoA unit. Finally, the covalent attachment of this moiety to monacolin J acid is catalyzed by the transesterase lovD to yield lovastatin. LovD has broad substrate specificity and can also convert monacolin J to simvastatin using alpha-dimethylbutanoyl-S-methyl-3-mercaptopropionate (DMB-S-MMP) as the thioester acyl donor, and can also catalyze the reverse reaction and function as hydrolase in vitro. LovD has much higher activity with LovF-bound 2-methylbutanoate than with free diketide substrates. In Aspergillus terreus, this protein is Dihydromonacolin L monooxygenase LovA.